The sequence spans 239 residues: Ribosomal RNA large subunit methyltransferase E (239 aa).

Residues glycine 88, tryptophan 90, aspartate 111, aspartate 127, and aspartate 151 each coordinate S-adenosyl-L-methionine. Lysine 191 (proton acceptor) is an active-site residue.

This sequence belongs to the class I-like SAM-binding methyltransferase superfamily. RNA methyltransferase RlmE family.

The protein resides in the cytoplasm. It carries out the reaction uridine(2552) in 23S rRNA + S-adenosyl-L-methionine = 2'-O-methyluridine(2552) in 23S rRNA + S-adenosyl-L-homocysteine + H(+). Functionally, specifically methylates the uridine in position 2552 of 23S rRNA at the 2'-O position of the ribose in the fully assembled 50S ribosomal subunit. The sequence is that of Ribosomal RNA large subunit methyltransferase E from Bartonella bacilliformis (strain ATCC 35685 / KC583 / Herrer 020/F12,63).